We begin with the raw amino-acid sequence, 338 residues long: GTPase Obg (338 aa).

Residues 1–159 enclose the Obg domain; the sequence is MKFIDEVTLF…AKLRLELKLM (159 aa). In terms of domain architecture, OBG-type G spans 160–331; it reads ADVGLLGLPN…LLDEIARRLW (172 aa). GTP-binding positions include 166-173, 191-195, 213-216, 283-286, and 312-314; these read GLPNAGKS, FTTIK, DIPG, TKLD, and SSA. Ser-173 and Thr-193 together coordinate Mg(2+).

The protein belongs to the TRAFAC class OBG-HflX-like GTPase superfamily. OBG GTPase family. In terms of assembly, monomer. Mg(2+) is required as a cofactor.

Its subcellular location is the cytoplasm. Functionally, an essential GTPase which binds GTP, GDP and possibly (p)ppGpp with moderate affinity, with high nucleotide exchange rates and a fairly low GTP hydrolysis rate. Plays a role in control of the cell cycle, stress response, ribosome biogenesis and in those bacteria that undergo differentiation, in morphogenesis control. In Pelobacter propionicus (strain DSM 2379 / NBRC 103807 / OttBd1), this protein is GTPase Obg.